Consider the following 632-residue polypeptide: Cell pattern formation-associated protein stuA (632 aa).

Residues 1-20 are compositionally biased toward polar residues; that stretch reads MNQTQSYMDVHTSHFSSPQP. Residues 1 to 27 are disordered; it reads MNQTQSYMDVHTSHFSSPQPYGSHGAT. In terms of domain architecture, HTH APSES-type spans 128–234; it reads RVTATLWEDE…HNIGGLLYHP (107 aa). Residues 162-183 constitute a DNA-binding region (H-T-H motif); the sequence is GTKLLNVAGMTRGRRDGILKSE. Disordered regions lie at residues 246-315, 340-386, 403-460, and 473-632; these read DSQQ…ASSL, QNVP…KSYY, AHSL…QQEP, and NRNS…MRRR. 4 stretches are compositionally biased toward polar residues: residues 254-264, 275-295, 340-354, and 364-376; these read GSQTARTSQGP, MNGSVPSHMPQASASTPQTNG, QNVPIDNGLNSTRSM, and GNNLQGMPPYQNQ. Low complexity predominate over residues 377-386; the sequence is PAYDSSKSYY. Residues 428–438 show a composition bias toward basic and acidic residues; sequence EQEHDEVKVDR. A compositionally biased stretch (polar residues) spans 473–506; that stretch reads NRNSYTYTTNPSVSSLSGDHSQLGGSPSHQNGSD. Positions 558-576 are enriched in low complexity; sequence AYASNYSGYSSVNGSSMGS. The segment at 578-604 is nuclear localization domain; sequence KRMRDDDDDHLSRSDGRENEYETKRRK. The span at 579–600 shows a compositional bias: basic and acidic residues; that stretch reads RMRDDDDDHLSRSDGRENEYET.

The protein belongs to the EFG1/PHD1/stuA family.

The protein resides in the nucleus. In terms of biological role, transcription factor that regulates asexual reproduction. Binds the StuA-response elements (StRE) with the consensus sequence 5'-(A/T)CGCG(T/A)N(A/C)-3' at the promoters of target genes. Required for accurate spatial organization of the developing conidiophore. Primarily involved in the formation of the uninucleate sterigmata, which arise by budding in this multicellular structure. Required for metula and phialide formation during conidiation but is not required for dimorphic growth. The polypeptide is Cell pattern formation-associated protein stuA (Talaromyces marneffei (Penicillium marneffei)).